The sequence spans 338 residues: Glyceraldehyde-3-phosphate dehydrogenase (338 aa).

Residues arginine 12 to isoleucine 13, aspartate 34, and arginine 79 contribute to the NAD(+) site. D-glyceraldehyde 3-phosphate contacts are provided by residues serine 150–threonine 152, threonine 181, threonine 210–glycine 211, and arginine 233. The active-site Nucleophile is the cysteine 151. Asparagine 315 provides a ligand contact to NAD(+).

It belongs to the glyceraldehyde-3-phosphate dehydrogenase family. As to quaternary structure, homotetramer.

It localises to the cytoplasm. It carries out the reaction D-glyceraldehyde 3-phosphate + phosphate + NAD(+) = (2R)-3-phospho-glyceroyl phosphate + NADH + H(+). Its pathway is carbohydrate degradation; glycolysis; pyruvate from D-glyceraldehyde 3-phosphate: step 1/5. The chain is Glyceraldehyde-3-phosphate dehydrogenase (gpd1) from Hypocrea atroviridis (Trichoderma atroviride).